Consider the following 313-residue polypeptide: DNA-directed RNA polymerase subunit alpha (313 aa).

The segment at 1–226 (MLEIEKPKIE…EHMRLFLGLT (226 aa)) is alpha N-terminal domain (alpha-NTD). Residues 242 to 313 (TRDRLMDMSI…LGLSLRSSEE (72 aa)) are alpha C-terminal domain (alpha-CTD).

It belongs to the RNA polymerase alpha chain family. Homodimer. The RNAP catalytic core consists of 2 alpha, 1 beta, 1 beta' and 1 omega subunit. When a sigma factor is associated with the core the holoenzyme is formed, which can initiate transcription.

It carries out the reaction RNA(n) + a ribonucleoside 5'-triphosphate = RNA(n+1) + diphosphate. Its function is as follows. DNA-dependent RNA polymerase catalyzes the transcription of DNA into RNA using the four ribonucleoside triphosphates as substrates. This Moorella thermoacetica (strain ATCC 39073 / JCM 9320) protein is DNA-directed RNA polymerase subunit alpha.